Reading from the N-terminus, the 505-residue chain is Maturase K (505 aa).

It belongs to the intron maturase 2 family. MatK subfamily.

It localises to the plastid. The protein localises to the chloroplast. Usually encoded in the trnK tRNA gene intron. Probably assists in splicing its own and other chloroplast group II introns. This is Maturase K from Ficus carica (Common fig).